Reading from the N-terminus, the 226-residue chain is 2-C-methyl-D-erythritol 4-phosphate cytidylyltransferase (226 aa).

The protein belongs to the IspD/TarI cytidylyltransferase family. IspD subfamily.

The enzyme catalyses 2-C-methyl-D-erythritol 4-phosphate + CTP + H(+) = 4-CDP-2-C-methyl-D-erythritol + diphosphate. It participates in isoprenoid biosynthesis; isopentenyl diphosphate biosynthesis via DXP pathway; isopentenyl diphosphate from 1-deoxy-D-xylulose 5-phosphate: step 2/6. In terms of biological role, catalyzes the formation of 4-diphosphocytidyl-2-C-methyl-D-erythritol from CTP and 2-C-methyl-D-erythritol 4-phosphate (MEP). In Synechococcus sp. (strain CC9902), this protein is 2-C-methyl-D-erythritol 4-phosphate cytidylyltransferase.